A 353-amino-acid chain; its full sequence is Photosystem II D2 protein (353 aa).

Thr2 is subject to N-acetylthreonine. A Phosphothreonine modification is found at Thr2. The helical transmembrane segment at 41–61 threads the bilayer; that stretch reads CAYFALGGWFTGTTFVTSWYT. Chlorophyll a is bound at residue His118. Residues 125–141 traverse the membrane as a helical segment; that stretch reads GFMLRQFELARSVQLRP. Positions 130 and 143 each coordinate pheophytin a. Residues 153-166 traverse the membrane as a helical segment; the sequence is VFVSVFLIYPLGQS. His198 lines the chlorophyll a pocket. The helical transmembrane segment at 208–228 threads the bilayer; the sequence is AALLCAIHGATVENTLFEDGD. A plastoquinone contacts are provided by His215 and Phe262. A Fe cation-binding site is contributed by His215. His269 is a Fe cation binding site. A helical membrane pass occupies residues 279-295; it reads GLWMSALGVVGLALNLR.

It belongs to the reaction center PufL/M/PsbA/D family. PSII is composed of 1 copy each of membrane proteins PsbA, PsbB, PsbC, PsbD, PsbE, PsbF, PsbH, PsbI, PsbJ, PsbK, PsbL, PsbM, PsbT, PsbX, PsbY, PsbZ, Psb30/Ycf12, at least 3 peripheral proteins of the oxygen-evolving complex and a large number of cofactors. It forms dimeric complexes. The D1/D2 heterodimer binds P680, chlorophylls that are the primary electron donor of PSII, and subsequent electron acceptors. It shares a non-heme iron and each subunit binds pheophytin, quinone, additional chlorophylls, carotenoids and lipids. There is also a Cl(-1) ion associated with D1 and D2, which is required for oxygen evolution. The PSII complex binds additional chlorophylls, carotenoids and specific lipids. is required as a cofactor.

The protein resides in the plastid. Its subcellular location is the chloroplast thylakoid membrane. It carries out the reaction 2 a plastoquinone + 4 hnu + 2 H2O = 2 a plastoquinol + O2. Functionally, photosystem II (PSII) is a light-driven water:plastoquinone oxidoreductase that uses light energy to abstract electrons from H(2)O, generating O(2) and a proton gradient subsequently used for ATP formation. It consists of a core antenna complex that captures photons, and an electron transfer chain that converts photonic excitation into a charge separation. The D1/D2 (PsbA/PsbD) reaction center heterodimer binds P680, the primary electron donor of PSII as well as several subsequent electron acceptors. D2 is needed for assembly of a stable PSII complex. This Olimarabidopsis pumila (Dwarf rocket) protein is Photosystem II D2 protein.